A 554-amino-acid chain; its full sequence is MYAKKFTGSDPQTVRTAAEIVALQRMKNRNDSDTDFSDDDEETSGGCPKMTPQEEQRMFEREQQIAFSGRCTIGDPESCHQLRTDINHRCGPRPSTSSNATWNILNRDVQRRNGPVMTSASRAHLLNTHLPNKKRRVDQLRTKNFCAQYIQNGRKMVVSSQGERENSFLSTKSGKIEISLPILSMQRTPCGPLQLVDLDTAVNQQGDLISYCTWKDAVYIGRMEQEDNQNITWFPIDWHGEHAVQNQCAVFCVRFSDDSEQIVCGTSEYSIHVFDVEQRRRIRTIVNAHEDDVNSVCFADYGSNLIYSAGDDGLVKVWDKRAWSDGDVIPVGVFAGHRDGVTYVDSRQDERYLLSNSKDQTIKVWDLRKFSCQGGVEATRACVQSQHWDYRWQPAPPGLCQPVQGDTSVMTLRGHSVLHTLVRAKFSPENTGRRFIYTGCARGEIVVYDIVTGTVSRRLKGHQAVVRECDWHPQENEIVSTSWDGVTTVWTWDERAEGVIAPYDHPNIHQFGDEDSCDELYQPIKKPQRKLRKPISARNAKCPTTSSEPDDFQI.

The disordered stretch occupies residues 24 to 52; the sequence is QRMKNRNDSDTDFSDDDEETSGGCPKMTP. The span at 33 to 43 shows a compositional bias: acidic residues; it reads DTDFSDDDEET. WD repeat units follow at residues 245–284, 288–328, 336–375, 414–458, and 461–500; these read QNQC…RIRT, AHED…DGDV, GHRD…CQGG, GHSV…VSRR, and GHQA…EGVI. The segment at 527–554 is disordered; sequence PQRKLRKPISARNAKCPTTSSEPDDFQI.

The protein belongs to the WD repeat LEC14B family.

Its function is as follows. Involved in regulation of lifespan. Required for dopaminergic CEP neuron degeneration in response to Mn(2+). The chain is DDB1- and CUL4-associated factor 11 homolog (wdr-23) from Caenorhabditis briggsae.